Consider the following 567-residue polypeptide: MPQRGHPSQERLWALPSLPMAHGPGSEVEGLLDLSFLTEEEQEAISDVLKRDAHLRQLEEGRVSKLRASLEDPWQLKILTGDWFQEARSQRHHHAHFGSDLVRASIRRKKSPKGDQALGSDGEAEAAGEDTIEGEPESRVSIEVAAPERSTETQGPDLSSPYVPSKASEGQEEEPQDHECELEAPGEGGVQVAEADPELDPEQKAEQESQPTPAQSKATSKILENGEEAPGLGPSLDRMLSSSSSVSSLNSSTLSGSLMSLSGEEAGTVQVRGSVLFSLHYEPGTSELRVQVIQCQGLAAARRRRSDPYVKSYLLPDKQSKRKTSVKKRNLNPIFNETLRHSVQQADLPGRVLSLSVWHRESLGRNIFLGEVEVPLDTWNWDSEATWLPLQPRVPPSPDELPSRGLLSLSLKYVPAGSEGGGQPQSGELHFWVKEAQSLVPLRPGSLDTYIQCSVLPDDSRASRQRTRVVRRSLSPVFNHTMVYDGFGPADLRQACAELSLWDHGALASRQLGGTRLSLGTGSSYGLQVPWMDSTPEEKQLWQTLLERPCEWVDGLLPLRTNLVPRA.

Positions 31–87 (LLDLSFLTEEEQEAISDVLKRDAHLRQLEEGRVSKLRASLEDPWQLKILTGDWFQEA) constitute a RabBD domain. A disordered region spans residues 103–255 (RASIRRKKSP…VSSLNSSTLS (153 aa)). Phosphoserine is present on serine 120. Acidic residues-rich tracts occupy residues 122–135 (GEAE…IEGE) and 170–184 (GQEE…ELEA). Polar residues predominate over residues 208–219 (ESQPTPAQSKAT). The residue at position 220 (serine 220) is a Phosphoserine. A compositionally biased stretch (low complexity) spans 235–255 (SLDRMLSSSSSVSSLNSSTLS). C2 domains lie at 271–390 (VRGS…WLPL) and 403–532 (SRGL…VPWM).

As to quaternary structure, monomer. Binds NCF2 and NRXN1. Binds RAB27A that has been activated by GTP-binding via its N-terminus. In terms of tissue distribution, highly expressed in lung. Detected at lower levels in spleen, liver and kidney, and at very low levels in heart, brain and skeletal muscle. Expressed in cytotoxic T-lymphocytes (CTL).

It is found in the endomembrane system. The protein localises to the cell membrane. Its function is as follows. Binds phosphatidylinositol 3,4,5-trisphosphate. May play a role in vesicle trafficking. Acts as a RAB27A effector protein and may play a role in cytotoxic granule exocytosis in lymphocytes. In Mus musculus (Mouse), this protein is Synaptotagmin-like protein 1 (Sytl1).